The sequence spans 20 residues: Ranalexin-1Cb (20 aa).

Cys14 and Cys20 are disulfide-bonded.

Expressed by the skin glands.

Its subcellular location is the secreted. Antibacterial activity against Gram-positive bacterium S.aureus and Gram-negative bacterium E.coli. Has activity against C.albicans. This chain is Ranalexin-1Cb, found in Lithobates clamitans (Green frog).